Reading from the N-terminus, the 567-residue chain is tRNA (uracil-O(2)-)-methyltransferase (567 aa).

S107 carries the post-translational modification Phosphoserine.

The protein belongs to the TRM44 family.

Its subcellular location is the cytoplasm. The enzyme catalyses uridine(44) in tRNA(Ser) + S-adenosyl-L-methionine = 2'-O-methyluridine(44) in tRNA(Ser) + S-adenosyl-L-homocysteine + H(+). TRNA (uracil-O(2)-)-methyltransferase, which catalyzes the formation of O(2)-methyluracil at position 44 (Um44) in tRNA(Ser). The sequence is that of tRNA (uracil-O(2)-)-methyltransferase (TRM44) from Saccharomyces cerevisiae (strain ATCC 204508 / S288c) (Baker's yeast).